We begin with the raw amino-acid sequence, 318 residues long: Ribonuclease Z (318 aa).

Zn(2+)-binding residues include His-62, His-64, Asp-66, His-67, His-144, Asp-215, and His-273. Residue Asp-66 is the Proton acceptor of the active site.

It belongs to the RNase Z family. As to quaternary structure, homodimer. The cofactor is Zn(2+).

The catalysed reaction is Endonucleolytic cleavage of RNA, removing extra 3' nucleotides from tRNA precursor, generating 3' termini of tRNAs. A 3'-hydroxy group is left at the tRNA terminus and a 5'-phosphoryl group is left at the trailer molecule.. Zinc phosphodiesterase, which displays some tRNA 3'-processing endonuclease activity. Probably involved in tRNA maturation, by removing a 3'-trailer from precursor tRNA. The sequence is that of Ribonuclease Z from Prochlorococcus marinus (strain MIT 9303).